Reading from the N-terminus, the 230-residue chain is uncharacterized protein (230 aa).

The a divalent metal cation site is built by Glu74, Glu76, and Asp105.

The protein belongs to the FAH family.

This is an uncharacterized protein from Pyrococcus horikoshii (strain ATCC 700860 / DSM 12428 / JCM 9974 / NBRC 100139 / OT-3).